A 171-amino-acid chain; its full sequence is 3-hydroxyanthranilate 3,4-dioxygenase (171 aa).

Residue Arg-44 participates in O2 binding. Positions 48, 54, and 92 each coordinate Fe cation. Glu-54 is a substrate binding site. Substrate-binding residues include Arg-96 and Glu-106. Residues Cys-121, Cys-126, Cys-160, and Cys-163 each coordinate a divalent metal cation.

The protein belongs to the 3-HAO family. It depends on Fe(2+) as a cofactor.

It is found in the cytoplasm. It catalyses the reaction 3-hydroxyanthranilate + O2 = (2Z,4Z)-2-amino-3-carboxymuconate 6-semialdehyde. Its pathway is cofactor biosynthesis; NAD(+) biosynthesis; quinolinate from L-kynurenine: step 3/3. Its function is as follows. Catalyzes the oxidative ring opening of 3-hydroxyanthranilate to 2-amino-3-carboxymuconate semialdehyde, which spontaneously cyclizes to quinolinate. This Yarrowia lipolytica (strain CLIB 122 / E 150) (Yeast) protein is 3-hydroxyanthranilate 3,4-dioxygenase.